A 245-amino-acid polypeptide reads, in one-letter code: Proteasome subunit alpha type-7-1B (245 aa).

Belongs to the peptidase T1A family. In terms of assembly, the 26S proteasome consists of a 20S proteasome core and two 19S regulatory subunits. The 20S proteasome core is composed of 28 subunits that are arranged in four stacked rings, resulting in a barrel-shaped structure. The two end rings are each formed by seven alpha subunits, and the two central rings are each formed by seven beta subunits. The catalytic chamber with the active sites is on the inside of the barrel. In terms of tissue distribution, testis specific.

The protein resides in the cytoplasm. The protein localises to the nucleus. Functionally, the proteasome is a multicatalytic proteinase complex which is characterized by its ability to cleave peptides with Arg, Phe, Tyr, Leu, and Glu adjacent to the leaving group at neutral or slightly basic pH. The proteasome has an ATP-dependent proteolytic activity. This Drosophila virilis (Fruit fly) protein is Proteasome subunit alpha type-7-1B (Pros28.1B).